Reading from the N-terminus, the 260-residue chain is Glutathione S-transferase domain-containing protein DDB_G0274223 (260 aa).

The 90-residue stretch at 7 to 96 (KVDYIFYTNN…YLAQKYNTFL (90 aa)) folds into the GST N-terminal domain. Residues 102–233 (NPHENSDVIT…GFKTFNPSAL (132 aa)) enclose the GST C-terminal domain.

It belongs to the GST superfamily.

In Dictyostelium discoideum (Social amoeba), this protein is Glutathione S-transferase domain-containing protein DDB_G0274223.